We begin with the raw amino-acid sequence, 305 residues long: Heme A synthase (305 aa).

Over M1–K6 the chain is Cytoplasmic. Residues V7–T27 form a helical membrane-spanning segment. Topologically, residues K28–R63 are extracellular. The cysteines at positions 35 and 42 are disulfide-linked. Residue E59 is part of the active site. Residue H62 participates in heme o binding. Residues M64 to M84 form a helical membrane-spanning segment. The Cytoplasmic segment spans residues K85–P92. Residues L93–V113 traverse the membrane as a helical segment. At W114 to A122 the chain is on the extracellular side. Residues L123 to F143 traverse the membrane as a helical segment. H124 serves as a coordination point for heme o. Over E144–L160 the chain is Cytoplasmic. A helical transmembrane segment spans residues R161–V181. Residues R182–Y212 lie on the Extracellular side of the membrane. The chain crosses the membrane as a helical span at residues F213 to F233. H214 contacts heme b. At R234 to R240 the chain is on the cytoplasmic side. The chain crosses the membrane as a helical span at residues V241–A261. Residues L262–Y271 lie on the Extracellular side of the membrane. The helical transmembrane segment at I272–L292 threads the bilayer. H276 contributes to the heme b binding site. The Cytoplasmic segment spans residues L293–K305.

This sequence belongs to the COX15/CtaA family. Type 1 subfamily. As to quaternary structure, interacts with CtaB. The cofactor is heme b.

It is found in the cell membrane. It catalyses the reaction Fe(II)-heme o + 2 A + H2O = Fe(II)-heme a + 2 AH2. It participates in porphyrin-containing compound metabolism; heme A biosynthesis; heme A from heme O: step 1/1. Its function is as follows. Catalyzes the conversion of heme O to heme A by two successive hydroxylations of the methyl group at C8. The first hydroxylation forms heme I, the second hydroxylation results in an unstable dihydroxymethyl group, which spontaneously dehydrates, resulting in the formyl group of heme A. The chain is Heme A synthase from Listeria welshimeri serovar 6b (strain ATCC 35897 / DSM 20650 / CCUG 15529 / CIP 8149 / NCTC 11857 / SLCC 5334 / V8).